Reading from the N-terminus, the 376-residue chain is Cytochrome b (376 aa).

4 helical membrane passes run 28–48 (YGFL…FLAS), 72–94 (WCFR…LHIL), 107–127 (SWIS…VGYV), and 169–189 (FFVL…IHIF). Heme b-binding residues include histidine 78 and histidine 92. Residues histidine 173 and histidine 187 each contribute to the heme b site. Histidine 192 serves as a coordination point for a ubiquinone. The next 4 membrane-spanning stretches (helical) occupy residues 214–234 (LLSL…IQSL), 274–294 (VPSK…LFLL), 317–337 (VPII…CQLP), and 340–360 (IFIL…LFVL).

This sequence belongs to the cytochrome b family. As to quaternary structure, the main subunits of complex b-c1 are: cytochrome b, cytochrome c1 and the Rieske protein. Requires heme b as cofactor.

It is found in the mitochondrion inner membrane. Component of the ubiquinol-cytochrome c reductase complex (complex III or cytochrome b-c1 complex) that is part of the mitochondrial respiratory chain. The b-c1 complex mediates electron transfer from ubiquinol to cytochrome c. Contributes to the generation of a proton gradient across the mitochondrial membrane that is then used for ATP synthesis. The sequence is that of Cytochrome b (MT-CYB) from Plasmodium falciparum.